Reading from the N-terminus, the 229-residue chain is Enolase-phosphatase E1 (229 aa).

Positions 206-229 (DRDPASHHPQVQRFDDIHPEQIPA) are disordered. Basic and acidic residues predominate over residues 218–229 (RFDDIHPEQIPA).

It belongs to the HAD-like hydrolase superfamily. MasA/MtnC family. Monomer. Mg(2+) is required as a cofactor.

The catalysed reaction is 5-methylsulfanyl-2,3-dioxopentyl phosphate + H2O = 1,2-dihydroxy-5-(methylsulfanyl)pent-1-en-3-one + phosphate. The protein operates within amino-acid biosynthesis; L-methionine biosynthesis via salvage pathway; L-methionine from S-methyl-5-thio-alpha-D-ribose 1-phosphate: step 3/6. It functions in the pathway amino-acid biosynthesis; L-methionine biosynthesis via salvage pathway; L-methionine from S-methyl-5-thio-alpha-D-ribose 1-phosphate: step 4/6. Bifunctional enzyme that catalyzes the enolization of 2,3-diketo-5-methylthiopentyl-1-phosphate (DK-MTP-1-P) into the intermediate 2-hydroxy-3-keto-5-methylthiopentenyl-1-phosphate (HK-MTPenyl-1-P), which is then dephosphorylated to form the acireductone 1,2-dihydroxy-3-keto-5-methylthiopentene (DHK-MTPene). The chain is Enolase-phosphatase E1 from Klebsiella oxytoca.